A 69-amino-acid polypeptide reads, in one-letter code: Large ribosomal subunit protein uL29 (69 aa).

Belongs to the universal ribosomal protein uL29 family.

The polypeptide is Large ribosomal subunit protein uL29 (Staphylococcus saprophyticus subsp. saprophyticus (strain ATCC 15305 / DSM 20229 / NCIMB 8711 / NCTC 7292 / S-41)).